The chain runs to 239 residues: tRNA (guanine-N(7)-)-methyltransferase (239 aa).

Residues Glu-69, Glu-94, Asp-121, and Asp-144 each contribute to the S-adenosyl-L-methionine site. Residue Asp-144 is part of the active site. Substrate contacts are provided by residues Lys-148, Asp-180, and 217-220 (TKFE).

The protein belongs to the class I-like SAM-binding methyltransferase superfamily. TrmB family.

The catalysed reaction is guanosine(46) in tRNA + S-adenosyl-L-methionine = N(7)-methylguanosine(46) in tRNA + S-adenosyl-L-homocysteine. Its pathway is tRNA modification; N(7)-methylguanine-tRNA biosynthesis. Functionally, catalyzes the formation of N(7)-methylguanine at position 46 (m7G46) in tRNA. The polypeptide is tRNA (guanine-N(7)-)-methyltransferase (Alcanivorax borkumensis (strain ATCC 700651 / DSM 11573 / NCIMB 13689 / SK2)).